The following is a 309-amino-acid chain: Porphobilinogen deaminase (309 aa).

Position 234 is an S-(dipyrrolylmethanemethyl)cysteine (Cys-234).

Belongs to the HMBS family. Monomer. It depends on dipyrromethane as a cofactor.

The enzyme catalyses 4 porphobilinogen + H2O = hydroxymethylbilane + 4 NH4(+). Its pathway is porphyrin-containing compound metabolism; protoporphyrin-IX biosynthesis; coproporphyrinogen-III from 5-aminolevulinate: step 2/4. Its function is as follows. Tetrapolymerization of the monopyrrole PBG into the hydroxymethylbilane pre-uroporphyrinogen in several discrete steps. This is Porphobilinogen deaminase (hemC) from Mycobacterium bovis (strain ATCC BAA-935 / AF2122/97).